Here is a 404-residue protein sequence, read N- to C-terminus: Propionate kinase (404 aa).

It belongs to the acetokinase family. PduW subfamily.

The protein localises to the cytoplasm. The enzyme catalyses propanoate + ATP = propanoyl phosphate + ADP. It participates in polyol metabolism; 1,2-propanediol degradation. In terms of biological role, works with phosphate acetyltransferase (pta) to capture exogenous propionate and regenerate propionyl-CoA during degradation of 1,2-propanediol (1,2-PD). The chain is Propionate kinase from Klebsiella pneumoniae (strain 342).